The primary structure comprises 564 residues: Threonine--tRNA ligase (564 aa).

The interval 167 to 464 (DHRAIGKRLE…LLEKTHGNLP (298 aa)) is catalytic. Zn(2+) contacts are provided by C260, H311, and H441.

This sequence belongs to the class-II aminoacyl-tRNA synthetase family. In terms of assembly, homodimer. Zn(2+) serves as cofactor.

The protein localises to the cytoplasm. The enzyme catalyses tRNA(Thr) + L-threonine + ATP = L-threonyl-tRNA(Thr) + AMP + diphosphate + H(+). Its function is as follows. Catalyzes the attachment of threonine to tRNA(Thr) in a two-step reaction: L-threonine is first activated by ATP to form Thr-AMP and then transferred to the acceptor end of tRNA(Thr). Also edits incorrectly charged L-seryl-tRNA(Thr). The sequence is that of Threonine--tRNA ligase from Mycoplasma pneumoniae (strain ATCC 29342 / M129 / Subtype 1) (Mycoplasmoides pneumoniae).